Here is a 358-residue protein sequence, read N- to C-terminus: Probable BOI-related E3 ubiquitin-protein ligase 2 (358 aa).

Residues 171-234 (KYEIEEKRKR…NQIWRDLAQT (64 aa)) adopt a coiled-coil conformation. The interval 214–250 (LEERVKSLSIENQIWRDLAQTNEATANHLRTNLEHVL) is WRD domain. The RING-type zinc finger occupies 310–345 (CRNCGEEESCVLLLPCRHLCLCGVCGSSVHTCPICT).

As to quaternary structure, interacts with the DELLA proteins GAI, RGA, RGL1, RGL2 and RGL3.

The catalysed reaction is S-ubiquitinyl-[E2 ubiquitin-conjugating enzyme]-L-cysteine + [acceptor protein]-L-lysine = [E2 ubiquitin-conjugating enzyme]-L-cysteine + N(6)-ubiquitinyl-[acceptor protein]-L-lysine.. Its pathway is protein degradation; proteasomal ubiquitin-dependent pathway. Its function is as follows. Probable E3 ubiquitin-protein ligase. Has no effect on the stability of the DELLA proteins. The sequence is that of Probable BOI-related E3 ubiquitin-protein ligase 2 (BRG2) from Arabidopsis thaliana (Mouse-ear cress).